The chain runs to 242 residues: DNA repair protein RecO (242 aa).

Belongs to the RecO family.

In terms of biological role, involved in DNA repair and RecF pathway recombination. The sequence is that of DNA repair protein RecO from Wolbachia pipientis subsp. Culex pipiens (strain wPip).